The sequence spans 382 residues: Na(+)/H(+) antiporter NhaA (382 aa).

Transmembrane regions (helical) follow at residues 11 to 31, 47 to 67, 88 to 108, 116 to 136, 145 to 165, 170 to 190, 261 to 283, 299 to 319, 327 to 347, and 353 to 373; these read FSVP…LDPA, FHFV…AVEI, LATL…NAII, GWGI…RLVF, FLLL…AVFY, HPTE…AYIL, IVVD…SSVG, LGIF…PQQV, TGLV…VAFV, and GSAK…IMLG.

The protein belongs to the NhaA Na(+)/H(+) (TC 2.A.33) antiporter family.

The protein localises to the cell inner membrane. It carries out the reaction Na(+)(in) + 2 H(+)(out) = Na(+)(out) + 2 H(+)(in). Its function is as follows. Na(+)/H(+) antiporter that extrudes sodium in exchange for external protons. In Geobacter sulfurreducens (strain ATCC 51573 / DSM 12127 / PCA), this protein is Na(+)/H(+) antiporter NhaA.